Consider the following 160-residue polypeptide: 2-C-methyl-D-erythritol 2,4-cyclodiphosphate synthase (160 aa).

Residues aspartate 12 and histidine 14 each coordinate a divalent metal cation. 4-CDP-2-C-methyl-D-erythritol 2-phosphate is bound by residues 12–14 and 38–39; these read DVH and HS. Histidine 46 provides a ligand contact to a divalent metal cation. Residues 60 to 62, 65 to 69, 136 to 139, phenylalanine 143, and arginine 146 contribute to the 4-CDP-2-C-methyl-D-erythritol 2-phosphate site; these read DIG, FPDTD, and TTTE.

The protein belongs to the IspF family. As to quaternary structure, homotrimer. A divalent metal cation is required as a cofactor.

It carries out the reaction 4-CDP-2-C-methyl-D-erythritol 2-phosphate = 2-C-methyl-D-erythritol 2,4-cyclic diphosphate + CMP. It participates in isoprenoid biosynthesis; isopentenyl diphosphate biosynthesis via DXP pathway; isopentenyl diphosphate from 1-deoxy-D-xylulose 5-phosphate: step 4/6. Involved in the biosynthesis of isopentenyl diphosphate (IPP) and dimethylallyl diphosphate (DMAPP), two major building blocks of isoprenoid compounds. Catalyzes the conversion of 4-diphosphocytidyl-2-C-methyl-D-erythritol 2-phosphate (CDP-ME2P) to 2-C-methyl-D-erythritol 2,4-cyclodiphosphate (ME-CPP) with a corresponding release of cytidine 5-monophosphate (CMP). The protein is 2-C-methyl-D-erythritol 2,4-cyclodiphosphate synthase of Acinetobacter baumannii (strain SDF).